The sequence spans 317 residues: MATSPKSTFVLGHRHLLGIEGLSAHDITGLLDLSEEYVELNRQVDKKRTVLRGRTQVNLFFEASTRTQSSFELAGKRLGADVMNMSVSSSSIKKGETLMDTAVTLNAMHPDILVVRHHASGAVELLARKVDGSVINAGDGAHEHPTQALLDALTIRRNKGRLEGLVIAICGDVLHSRVARSNILLLNTMGARVRVVAPSTLLPPGIERMGVEVARDMREGLNGADIVMMLRLQRERMNGSFVPSSSEYFQYFGLDQKKLAYAKPDALVMHPGPMNRGVEIDSIVADGAQSLIREQVEMGVAVRMAVLEALARNLPNA.

The carbamoyl phosphate site is built by Arg66 and Thr67. Lys94 contacts L-aspartate. Residues Arg116, His144, and Gln147 each coordinate carbamoyl phosphate. Positions 177 and 231 each coordinate L-aspartate. 2 residues coordinate carbamoyl phosphate: Gly272 and Pro273.

The protein belongs to the aspartate/ornithine carbamoyltransferase superfamily. ATCase family. As to quaternary structure, heterododecamer (2C3:3R2) of six catalytic PyrB chains organized as two trimers (C3), and six regulatory PyrI chains organized as three dimers (R2).

The enzyme catalyses carbamoyl phosphate + L-aspartate = N-carbamoyl-L-aspartate + phosphate + H(+). Its pathway is pyrimidine metabolism; UMP biosynthesis via de novo pathway; (S)-dihydroorotate from bicarbonate: step 2/3. Its function is as follows. Catalyzes the condensation of carbamoyl phosphate and aspartate to form carbamoyl aspartate and inorganic phosphate, the committed step in the de novo pyrimidine nucleotide biosynthesis pathway. This Bradyrhizobium sp. (strain BTAi1 / ATCC BAA-1182) protein is Aspartate carbamoyltransferase catalytic subunit.